The sequence spans 248 residues: Tetraspanin-18 (248 aa).

At 1–13 the chain is on the cytoplasmic side; that stretch reads MEGDCLSCMKYLM. The chain crosses the membrane as a helical span at residues 14 to 34; sequence FVFNFFIFLGGACLLAIGIWV. Topologically, residues 35–49 are extracellular; it reads MVDPTGFREIVAANP. Residues 50–70 traverse the membrane as a helical segment; that stretch reads LLLTGAYILLAMGGLLFLLGF. The Cytoplasmic portion of the chain corresponds to 71-83; that stretch reads LGCCGAVRENKCL. A helical membrane pass occupies residues 84 to 104; that stretch reads LLFFFLFILIIFLAELSAAIL. Residues 105–223 lie on the Extracellular side of the membrane; that stretch reads AFIFRENLTR…TFETYVYLAG (119 aa). N-linked (GlcNAc...) asparagine glycans are attached at residues asparagine 111 and asparagine 129. The chain crosses the membrane as a helical span at residues 224–244; that stretch reads ALAIGVLAIELFAMIFAMCLF. Over 245–248 the chain is Cytoplasmic; that stretch reads RGIQ.

This sequence belongs to the tetraspanin (TM4SF) family. In terms of assembly, interacts with ORAI1; this interaction regulates ORAI1 exit from the endoplasmic (ER), and/or Golgi, and trafficking to the cell surface. In terms of tissue distribution, highly expressed in primary endothelial cells. Expressed in the embryo heart. Weakly expressed the embryo skeletal muscle.

It is found in the membrane. Functionally, plays a role in the cell surface localization of ORAI1 and may participate in the regulation of Ca(2+) signaling and the VWF release in response to inflammatory stimuli. This chain is Tetraspanin-18, found in Homo sapiens (Human).